A 2290-amino-acid polypeptide reads, in one-letter code: Protein Ycf2 (2290 aa).

An ATP-binding site is contributed by 1644 to 1651; that stretch reads GSIGTGRS.

It belongs to the Ycf2 family.

Its subcellular location is the plastid. It is found in the chloroplast stroma. Its function is as follows. Probable ATPase of unknown function. Its presence in a non-photosynthetic plant (Epifagus virginiana) and experiments in tobacco indicate that it has an essential function which is probably not related to photosynthesis. In Nasturtium officinale (Watercress), this protein is Protein Ycf2.